Reading from the N-terminus, the 919-residue chain is Sarcosine dehydrogenase, mitochondrial (919 aa).

A mitochondrion-targeting transit peptide spans 1–22 (MASLSRVLRVAATCPRGRAAWN). Lysine 38 is subject to N6-succinyllysine. Histidine 109 carries the post-translational modification Tele-8alpha-FAD histidine. At lysine 174 the chain carries N6-acetyllysine; alternate. Residue lysine 174 is modified to N6-succinyllysine; alternate. N6-succinyllysine occurs at positions 278, 378, 392, and 535. 2 positions are modified to N6-acetyllysine: lysine 560 and lysine 776. Tyrosine 778 carries the post-translational modification Phosphotyrosine. An N6-acetyllysine; alternate mark is found at lysine 803, lysine 885, and lysine 905. N6-succinyllysine; alternate is present on residues lysine 803, lysine 885, and lysine 905.

It belongs to the GcvT family. FAD serves as cofactor.

The protein localises to the mitochondrion matrix. The catalysed reaction is (6S)-5,6,7,8-tetrahydrofolyl-(gamma-L-Glu)(n) + sarcosine + oxidized [electron-transfer flavoprotein] + H(+) = (6R)-5,10-methylenetetrahydrofolyl-(gamma-L-Glu)(n) + reduced [electron-transfer flavoprotein] + glycine. The protein operates within amine and polyamine degradation; sarcosine degradation; formaldehyde and glycine from sarcosine: step 1/1. In terms of biological role, catalyzes the last step of the oxidative degradation of choline to glycine. Converts sarcosine into glycine. The sequence is that of Sarcosine dehydrogenase, mitochondrial from Mus musculus (Mouse).